Reading from the N-terminus, the 860-residue chain is Nuclear pore complex protein NUP93B (860 aa).

It belongs to the nucleoporin interacting component (NIC) family. In terms of assembly, part of the nuclear pore complex (NPC). The NPC has an eight-fold symmetrical structure comprising a central transport channel and two rings, the cytoplasmic and nuclear rings, to which eight filaments are attached. The cytoplasmic filaments have loose ends, while the nuclear filaments are joined in a distal ring, forming a nuclear basket. NPCs are highly dynamic in configuration and composition, and can be devided in 3 subcomplexes, the NUP62 subcomplex, the NUP107-160 subcomplex and the NUP93 subcomplex, containing approximately 30 different nucleoporin proteins.

The protein localises to the nucleus envelope. It is found in the nucleus. It localises to the nuclear pore complex. This is Nuclear pore complex protein NUP93B from Arabidopsis thaliana (Mouse-ear cress).